Consider the following 246-residue polypeptide: UPF0309 protein OB3413 (246 aa).

One can recognise an SIS domain in the interval 33 to 212 (MATAVMNGNS…VLKMIEIFEE (180 aa)).

This sequence belongs to the UPF0309 family.

This Oceanobacillus iheyensis (strain DSM 14371 / CIP 107618 / JCM 11309 / KCTC 3954 / HTE831) protein is UPF0309 protein OB3413.